Here is a 159-residue protein sequence, read N- to C-terminus: G-protein-signaling modulator 3 (159 aa).

The tract at residues 1-54 is disordered; it reads MEAERPQEEDGEQSLPQDDQGWPPVNATARPWRSAPPSPPPPGTRHTALGPRSG. A phosphoserine mark is found at Ser-34, Ser-38, Ser-55, and Ser-58. Over residues 34-43 the composition is skewed to pro residues; it reads SAPPSPPPPG. Position 61 is a phosphothreonine (Thr-61). The region spanning 61–83 is the GoLoco 1 domain; the sequence is TELLLDLVAEAQSRRLEEQRATF. A disordered region spans residues 77 to 97; sequence EEQRATFHTPEAPPNLAPAPP. Positions 87–97 are enriched in pro residues; that stretch reads EAPPNLAPAPP. 2 consecutive GoLoco domains span residues 103–125 and 131–154; these read KEQL…RSDP and GQEL…RSRP.

The protein localises to the cytoplasm. In terms of biological role, interacts with subunit of G(i) alpha proteins and regulates the activation of G(i) alpha proteins. This Mus musculus (Mouse) protein is G-protein-signaling modulator 3 (Gpsm3).